Consider the following 297-residue polypeptide: tRNA(Ile)-lysidine synthase (297 aa).

16–21 (SGGSDS) is an ATP binding site.

The protein belongs to the tRNA(Ile)-lysidine synthase family.

It localises to the cytoplasm. The enzyme catalyses cytidine(34) in tRNA(Ile2) + L-lysine + ATP = lysidine(34) in tRNA(Ile2) + AMP + diphosphate + H(+). Its function is as follows. Ligates lysine onto the cytidine present at position 34 of the AUA codon-specific tRNA(Ile) that contains the anticodon CAU, in an ATP-dependent manner. Cytidine is converted to lysidine, thus changing the amino acid specificity of the tRNA from methionine to isoleucine. This is tRNA(Ile)-lysidine synthase from Mesomycoplasma hyopneumoniae (strain 232) (Mycoplasma hyopneumoniae).